Consider the following 372-residue polypeptide: Cytochrome b (372 aa).

Helical transmembrane passes span 25-45 (FGSMLLTCLALQTMTGFFLAI), 69-90 (WMMQNLHAIGASMFFICIYIHI), 105-125 (WLSGTTLLIILMATAFFGYVL), and 170-190 (FFALHFILPFTIISMSSIHIM). Positions 75 and 89 each coordinate heme b. Heme b contacts are provided by His174 and His188. His193 contacts a ubiquinone. 4 helical membrane passes run 218 to 238 (HKDMLMLTIMMTALFIIMSFM), 280 to 300 (LGGTVALVLSVTILMTMPFTH), 312 to 332 (LMQFMFWTLVATFITITWAAT), and 339 to 358 (FTTIGQATAILYFTFFIMNP).

It belongs to the cytochrome b family. In terms of assembly, the cytochrome bc1 complex contains 3 respiratory subunits (MT-CYB, CYC1 and UQCRFS1), 2 core proteins (UQCRC1 and UQCRC2) and probably 6 low-molecular weight proteins. Requires heme b as cofactor.

The protein resides in the mitochondrion inner membrane. Its function is as follows. Component of the ubiquinol-cytochrome c reductase complex (complex III or cytochrome b-c1 complex) that is part of the mitochondrial respiratory chain. The b-c1 complex mediates electron transfer from ubiquinol to cytochrome c. Contributes to the generation of a proton gradient across the mitochondrial membrane that is then used for ATP synthesis. In Pantherophis obsoletus (Black ratsnake), this protein is Cytochrome b (MT-CYB).